Here is a 90-residue protein sequence, read N- to C-terminus: Small ribosomal subunit protein uS15 (90 aa).

This sequence belongs to the universal ribosomal protein uS15 family. Part of the 30S ribosomal subunit. Forms a bridge to the 50S subunit in the 70S ribosome, contacting the 23S rRNA.

Its function is as follows. One of the primary rRNA binding proteins, it binds directly to 16S rRNA where it helps nucleate assembly of the platform of the 30S subunit by binding and bridging several RNA helices of the 16S rRNA. Forms an intersubunit bridge (bridge B4) with the 23S rRNA of the 50S subunit in the ribosome. The polypeptide is Small ribosomal subunit protein uS15 (Wolbachia pipientis subsp. Culex pipiens (strain wPip)).